The sequence spans 310 residues: Phosphoribosylaminoimidazole-succinocarboxamide synthase (310 aa).

Belongs to the SAICAR synthetase family.

It catalyses the reaction 5-amino-1-(5-phospho-D-ribosyl)imidazole-4-carboxylate + L-aspartate + ATP = (2S)-2-[5-amino-1-(5-phospho-beta-D-ribosyl)imidazole-4-carboxamido]succinate + ADP + phosphate + 2 H(+). It participates in purine metabolism; IMP biosynthesis via de novo pathway; 5-amino-1-(5-phospho-D-ribosyl)imidazole-4-carboxamide from 5-amino-1-(5-phospho-D-ribosyl)imidazole-4-carboxylate: step 1/2. The sequence is that of Phosphoribosylaminoimidazole-succinocarboxamide synthase from Cytophaga hutchinsonii (strain ATCC 33406 / DSM 1761 / CIP 103989 / NBRC 15051 / NCIMB 9469 / D465).